The chain runs to 372 residues: MAAEGDSPARPRVYFDISIGGKSVGRITMELYADLVPKTADNFRSLCTGEKGIGKSGKPLHYKGSVFHRVIKQFMIQGGDFTAGDGTGGESIYGNKFDDEAFPIKHEKPFLLSMANAGPNTNGSQFFITTVPTPHLDGKHVVFGEVLNGKSVVRQIENLTTQSGDRPAKEALIVDCGELTGDAALAADVKQPDALGDPYEDFPEDCTDTLDAVAVLKIAKASKDYGNTAFKSGNYSLGLDKYQKGLRYINEEPELEDQPQSIKDELEALRFSLNNNSALLNIKLEAWDDAARSASAALEVGGVKDADRAKAFYRRGLANIHLKDEEAAVRDLTEANKLAPNDSAITRELNGVKTKAAARAAKEKAAYKKFFT.

Residues 14–178 (YFDISIGGKS…KEALIVDCGE (165 aa)) enclose the PPIase cyclophilin-type domain. 3 TPR repeats span residues 219-252 (AKAS…INEE), 271-304 (FSLN…GGVK), and 309-342 (AKAF…APND).

Belongs to the cyclophilin-type PPIase family. PPIase D subfamily.

The protein resides in the cytoplasm. The catalysed reaction is [protein]-peptidylproline (omega=180) = [protein]-peptidylproline (omega=0). In terms of biological role, PPIases accelerate the folding of proteins. It catalyzes the cis-trans isomerization of proline imidic peptide bonds in oligopeptides. The protein is Peptidyl-prolyl cis-trans isomerase D (CPR6) of Gibberella zeae (strain ATCC MYA-4620 / CBS 123657 / FGSC 9075 / NRRL 31084 / PH-1) (Wheat head blight fungus).